A 490-amino-acid chain; its full sequence is Aspartyl/glutamyl-tRNA(Asn/Gln) amidotransferase subunit B (490 aa).

It belongs to the GatB/GatE family. GatB subfamily. As to quaternary structure, heterotrimer of A, B and C subunits.

The catalysed reaction is L-glutamyl-tRNA(Gln) + L-glutamine + ATP + H2O = L-glutaminyl-tRNA(Gln) + L-glutamate + ADP + phosphate + H(+). It catalyses the reaction L-aspartyl-tRNA(Asn) + L-glutamine + ATP + H2O = L-asparaginyl-tRNA(Asn) + L-glutamate + ADP + phosphate + 2 H(+). In terms of biological role, allows the formation of correctly charged Asn-tRNA(Asn) or Gln-tRNA(Gln) through the transamidation of misacylated Asp-tRNA(Asn) or Glu-tRNA(Gln) in organisms which lack either or both of asparaginyl-tRNA or glutaminyl-tRNA synthetases. The reaction takes place in the presence of glutamine and ATP through an activated phospho-Asp-tRNA(Asn) or phospho-Glu-tRNA(Gln). The sequence is that of Aspartyl/glutamyl-tRNA(Asn/Gln) amidotransferase subunit B from Zymomonas mobilis subsp. mobilis (strain ATCC 31821 / ZM4 / CP4).